A 321-amino-acid chain; its full sequence is MRPTGWRWPVLSLLLVLLPFQAAGPPRPRAAWTRIVSFLTCALTALAASWMTATRTLSNEITHCLTLTRLFRRYTIVNSWLLDRSLREAVLPSKTVTRMAIDQLWWPRKYTSTNGTIWCWGGGPSGISCRWIRINTCASCRTADPSGNARVYTVARPQPPTCCSNGRPRPLFRTFRYRTLPYLINPKRANNGAGPRQRFRNVYPPRLATVSLGRDGNGPVRGISSSPTRLTRPRMGGNTLRVSRTFGPVPCIVPEAKPWTPRVKRRCPLGATSRRLRPQARRGNVCACVVENGYGTAGYVPAAARCRLVRPPVRSTTRFST.

The signal sequence occupies residues 1-23 (MRPTGWRWPVLSLLLVLLPFQAA). Positions 84–87 (RSLR) match the RxLR motif. Asparagine 114 is a glycosylation site (N-linked (GlcNAc...) asparagine). The interval 210–237 (VSLGRDGNGPVRGISSSPTRLTRPRMGG) is disordered.

It belongs to the RxLR effector family.

It is found in the secreted. The protein resides in the host cell. Secreted effector that partially suppresses the host cell death induced by cell death-inducing proteins. This Plasmopara viticola (Downy mildew of grapevine) protein is Secreted RxLR effector protein 71.